The following is a 324-amino-acid chain: tRNA dimethylallyltransferase (324 aa).

An ATP-binding site is contributed by 17–24; sequence GPTASGKT. Position 19 to 24 (19 to 24) interacts with substrate; that stretch reads TASGKT. Interaction with substrate tRNA regions lie at residues 42–45, 166–170, 251–256, and 284–291; these read DSAL, QRIQR, RCVGYR, and KRQITWLR.

The protein belongs to the IPP transferase family. In terms of assembly, monomer. Mg(2+) is required as a cofactor.

The catalysed reaction is adenosine(37) in tRNA + dimethylallyl diphosphate = N(6)-dimethylallyladenosine(37) in tRNA + diphosphate. Its function is as follows. Catalyzes the transfer of a dimethylallyl group onto the adenine at position 37 in tRNAs that read codons beginning with uridine, leading to the formation of N6-(dimethylallyl)adenosine (i(6)A). This Burkholderia vietnamiensis (strain G4 / LMG 22486) (Burkholderia cepacia (strain R1808)) protein is tRNA dimethylallyltransferase.